Here is an 87-residue protein sequence, read N- to C-terminus: MAERRKYKKRYCKYCEAKVDFMDYKDVGALRFSLSERYKIMPRRLTGNCKRHQDMIATVIKRARAAALVPYTVTRNTVVTAPFENLR.

The protein belongs to the bacterial ribosomal protein bS18 family. Part of the 30S ribosomal subunit. Forms a tight heterodimer with protein bS6.

Binds as a heterodimer with protein bS6 to the central domain of the 16S rRNA, where it helps stabilize the platform of the 30S subunit. This Sulfurimonas denitrificans (strain ATCC 33889 / DSM 1251) (Thiomicrospira denitrificans (strain ATCC 33889 / DSM 1251)) protein is Small ribosomal subunit protein bS18.